The primary structure comprises 213 residues: Large ribosomal subunit protein uL1 (213 aa).

It belongs to the universal ribosomal protein uL1 family. Part of the 50S ribosomal subunit.

Its function is as follows. Probably involved in E site tRNA release. Binds directly to 23S rRNA. In terms of biological role, protein L1 is also a translational repressor protein, it controls the translation of the L1 operon by binding to its mRNA. Thus it also controls transcription of L10 and L12 by translational coupling. Unlike the case in E.coli, where the site is in the untranslated mRNA leader, this site is within the L1 protein's structural gene. The protein is Large ribosomal subunit protein uL1 of Methanococcus vannielii (strain ATCC 35089 / DSM 1224 / JCM 13029 / OCM 148 / SB).